The sequence spans 270 residues: Undecaprenyl-diphosphatase (270 aa).

Transmembrane regions (helical) follow at residues 1–21 (MTWW…FIPV), 92–112 (FRLG…YVLF), 119–139 (AFGS…LLLL), 150–170 (LSGV…VPGI), 193–213 (FSFL…GLEL), 223–243 (LSLG…IYVV), and 250–270 (GNLQ…LWLL).

It belongs to the UppP family.

It localises to the cell inner membrane. The enzyme catalyses di-trans,octa-cis-undecaprenyl diphosphate + H2O = di-trans,octa-cis-undecaprenyl phosphate + phosphate + H(+). Functionally, catalyzes the dephosphorylation of undecaprenyl diphosphate (UPP). Confers resistance to bacitracin. This Salinibacter ruber (strain DSM 13855 / M31) protein is Undecaprenyl-diphosphatase.